A 157-amino-acid polypeptide reads, in one-letter code: Ribonuclease H (157 aa).

One can recognise an RNase H type-1 domain in the interval 1 to 146 (MPDLFAYTDG…ADELARAGMA (146 aa)). 4 residues coordinate Mg(2+): D9, E52, D74, and D138.

Belongs to the RNase H family. In terms of assembly, monomer. It depends on Mg(2+) as a cofactor.

The protein resides in the cytoplasm. The enzyme catalyses Endonucleolytic cleavage to 5'-phosphomonoester.. In terms of biological role, endonuclease that specifically degrades the RNA of RNA-DNA hybrids. The protein is Ribonuclease H of Ruegeria sp. (strain TM1040) (Silicibacter sp.).